Reading from the N-terminus, the 310-residue chain is Malate dehydrogenase (310 aa).

Residues 7–13 (GAAGGIG) and D34 contribute to the NAD(+) site. Residues R81 and R87 each coordinate substrate. NAD(+) contacts are provided by residues N94 and 117 to 119 (ITN). 2 residues coordinate substrate: N119 and R153. The active-site Proton acceptor is the H177. M227 is an NAD(+) binding site.

This sequence belongs to the LDH/MDH superfamily. MDH type 1 family. As to quaternary structure, homodimer.

It carries out the reaction (S)-malate + NAD(+) = oxaloacetate + NADH + H(+). Functionally, catalyzes the reversible oxidation of malate to oxaloacetate. This Idiomarina loihiensis (strain ATCC BAA-735 / DSM 15497 / L2-TR) protein is Malate dehydrogenase.